Here is a 263-residue protein sequence, read N- to C-terminus: Small ribosomal subunit protein uS2 (263 aa).

This sequence belongs to the universal ribosomal protein uS2 family.

The sequence is that of Small ribosomal subunit protein uS2 from Hyphomonas neptunium (strain ATCC 15444).